Reading from the N-terminus, the 773-residue chain is Beta-hexosaminidase B (773 aa).

Residues 1-19 (MKFNRLMALLFGVSSPLYA) form the signal peptide. Intrachain disulfides connect Cys-46/Cys-53, Cys-389/Cys-397, and Cys-496/Cys-542. Residue Glu-531 is the Proton donor of the active site.

This sequence belongs to the glycosyl hydrolase 20 family.

The catalysed reaction is Hydrolysis of terminal non-reducing N-acetyl-D-hexosamine residues in N-acetyl-beta-D-hexosaminides.. This is Beta-hexosaminidase B (nag096) from Pseudoalteromonas piscicida.